The primary structure comprises 409 residues: NADH-quinone oxidoreductase subunit D (409 aa).

Belongs to the complex I 49 kDa subunit family. As to quaternary structure, NDH-1 is composed of 14 different subunits. Subunits NuoB, C, D, E, F, and G constitute the peripheral sector of the complex.

It localises to the cell inner membrane. The catalysed reaction is a quinone + NADH + 5 H(+)(in) = a quinol + NAD(+) + 4 H(+)(out). Its function is as follows. NDH-1 shuttles electrons from NADH, via FMN and iron-sulfur (Fe-S) centers, to quinones in the respiratory chain. The immediate electron acceptor for the enzyme in this species is believed to be ubiquinone. Couples the redox reaction to proton translocation (for every two electrons transferred, four hydrogen ions are translocated across the cytoplasmic membrane), and thus conserves the redox energy in a proton gradient. This Helicobacter pylori (strain G27) protein is NADH-quinone oxidoreductase subunit D.